The chain runs to 229 residues: MLICIPDILDKAEVADFRRVMDAAEWEDGRSTAGAQSAMVKRNEQLPPDSDVARALGQRVLSALTRSPLFISAAIPLHIFPPLFNRYASSNGHHFGVHVDNAVRGDRLTGLRIRTDLSVTLFLSEPEDYDGGVLTVEDYYGSHEVKLPAGHLVLYPASSLHLVTPVTRGTRVASFFWLQSMVRDAHARSMIFDLDTAVQALVERLGRDDPETVKLTGIYHNLIRYWADV.

The Fe2OG dioxygenase domain maps to 78 to 180 (HIFPPLFNRY…RVASFFWLQS (103 aa)). Fe cation-binding residues include His98, Asp100, and His161. Arg171 serves as a coordination point for 2-oxoglutarate.

Requires Fe(2+) as cofactor. L-ascorbate is required as a cofactor.

The sequence is that of PKHD-type hydroxylase OCAR_6723/OCA5_c13470 from Afipia carboxidovorans (strain ATCC 49405 / DSM 1227 / KCTC 32145 / OM5) (Oligotropha carboxidovorans).